The sequence spans 255 residues: MCATPVSPSPESPRSAQAGAAASDAAAQPVIVRWRGLEDYQASFDAMRAFTGSRSFETSDEIWLVEHPPVFTLGQAGDPAHLLAADSGIPLVKVDRGGQITYHGPGQVVGYLLLDLRRRKLMVRELVTRIEQAVIDTLAAYNLAGERKAGAPGIYVSPEQPNAGLHAGAKIAALGLKIRNGCSYHGVSLNVKMDLQPFLAINPCGYAGLETVDMATLGVAAGWDDVAQTLAASLIANIDGIPAAVGLPQAGAITA.

Residues 1-21 (MCATPVSPSPESPRSAQAGAA) are disordered. A BPL/LPL catalytic domain is found at 56–242 (FETSDEIWLV…SLIANIDGIP (187 aa)). Substrate contacts are provided by residues 96 to 103 (RGGQITYH), 173 to 175 (ALG), and 186 to 188 (GVS). The active-site Acyl-thioester intermediate is the cysteine 204.

It belongs to the LipB family.

It localises to the cytoplasm. The enzyme catalyses octanoyl-[ACP] + L-lysyl-[protein] = N(6)-octanoyl-L-lysyl-[protein] + holo-[ACP] + H(+). It functions in the pathway protein modification; protein lipoylation via endogenous pathway; protein N(6)-(lipoyl)lysine from octanoyl-[acyl-carrier-protein]: step 1/2. Catalyzes the transfer of endogenously produced octanoic acid from octanoyl-acyl-carrier-protein onto the lipoyl domains of lipoate-dependent enzymes. Lipoyl-ACP can also act as a substrate although octanoyl-ACP is likely to be the physiological substrate. The protein is Octanoyltransferase of Paraburkholderia phymatum (strain DSM 17167 / CIP 108236 / LMG 21445 / STM815) (Burkholderia phymatum).